The chain runs to 334 residues: Retinol dehydrogenase 13 (334 aa).

Ser-2 is modified (N-acetylserine). Residue 45–51 coordinates NADP(+); it reads GANTGIG. A substrate-binding site is contributed by Ser-174. The active-site Proton acceptor is Tyr-200.

Belongs to the short-chain dehydrogenases/reductases (SDR) family.

The protein resides in the mitochondrion inner membrane. It catalyses the reaction all-trans-retinol + NADP(+) = all-trans-retinal + NADPH + H(+). It participates in cofactor metabolism; retinol metabolism. Its function is as follows. Retinol dehydrogenase with a clear preference for NADP. Oxidizes all-trans-retinol, but seems to reduce all-trans-retinal with much higher efficiency. Has no activity towards steroid. This Mus musculus (Mouse) protein is Retinol dehydrogenase 13 (Rdh13).